Reading from the N-terminus, the 822-residue chain is Fibroblast growth factor receptor 1 (822 aa).

The first 21 residues, 1–21 (MWGWRGLLFWAVLVTATLCTA), serve as a signal peptide directing secretion. At 22–376 (RPAPTLPEQA…AVMTSPLYLE (355 aa)) the chain is on the extracellular side. Residues 25–119 (PTLPEQAQPW…DTTYFSVNVS (95 aa)) enclose the Ig-like C2-type 1 domain. Cysteines 55 and 101 form a disulfide. Residues Asn77 and Asn117 are each glycosylated (N-linked (GlcNAc...) asparagine). A disordered region spans residues 120–162 (DALPSSEDDDDDDDSSSEEKETDNTKPNRRPVAPYWTSPEKME). Over residues 125 to 135 (SEDDDDDDDSS) the composition is skewed to acidic residues. Over residues 136–145 (SEEKETDNTK) the composition is skewed to basic and acidic residues. 2 Ig-like C2-type domains span residues 158-246 (PEKM…YQLD) and 255-357 (PILQ…AWLT). The interval 160 to 177 (KMEKKLHAVPAAKTVKFK) is heparin-binding. Cys178 and Cys230 form a disulfide bridge. Asn227, Asn240, Asn264, Asn296, Asn317, and Asn330 each carry an N-linked (GlcNAc...) asparagine glycan. The cysteines at positions 277 and 341 are disulfide-linked. A helical transmembrane segment spans residues 377–397 (IIIYCTGAFLISCMVGSVIIY). Topologically, residues 398 to 822 (KMKSGTKKSD…QLANGGLNRR (425 aa)) are cytoplasmic. Position 463 is a phosphotyrosine; by autocatalysis (Tyr463). Residues 478-767 (LVLGKPLGEG…VALTSNQEYL (290 aa)) enclose the Protein kinase domain. ATP contacts are provided by residues 484–490 (LGEGCFG), Lys514, 562–564 (EYA), and Asn568. 2 positions are modified to phosphotyrosine; by autocatalysis: Tyr583 and Tyr585. Asp623 functions as the Proton acceptor in the catalytic mechanism. ATP-binding residues include Arg627 and Asp641. A phosphotyrosine; by autocatalysis mark is found at Tyr653, Tyr654, Tyr730, and Tyr766. The segment at 770 to 822 (SMPLDQDSPSFPDTRSSTCSSGEDSVFSHEPFPEEPCLPRHPTQLANGGLNRR) is disordered. Positions 776–792 (DSPSFPDTRSSTCSSGE) are enriched in polar residues.

The protein belongs to the protein kinase superfamily. Tyr protein kinase family. Fibroblast growth factor receptor subfamily. As to quaternary structure, monomer. Homodimer after ligand binding. Interacts predominantly with FGF1 and FGF2, but can also interact with FGF3, FGF4, FGF5, FGF6, FGF8, FGF10, FGF19, FGF21, FGF22 and FGF23 (in vitro). Ligand specificity is determined by tissue-specific expression of isoforms, and differences in the third Ig-like domain are crucial for ligand specificity. Affinity for fibroblast growth factors (FGFs) is increased by heparan sulfate glycosaminoglycans that function as coreceptors. Likewise, KLB increases the affinity for FGF19, FGF21 and FGF23. Interacts (phosphorylated on Tyr-766) with PLCG1 (via SH2 domains). Interacts with FRS2. Interacts (via C-terminus) with NEDD4 (via WW3 domain). Interacts with RPS6KA1. Interacts with KL. Interacts with SHB (via SH2 domain) and GRB10. Interacts with ANOS1; this interaction does not interfere with FGF2-binding to FGFR1, but prevents binding of heparin-bound FGF2. Interacts with SOX2 and SOX3. Interacts with FLRT1, FLRT2 and FLRT3. Found in a ternary complex with FGF1 and ITGAV:ITGB3. In terms of processing, autophosphorylated. Binding of FGF family members together with heparan sulfate proteoglycan or heparin promotes receptor dimerization and autophosphorylation on tyrosine residues. Autophosphorylation occurs in trans between the two FGFR molecules present in the dimer and proceeds in a highly ordered manner. Initial autophosphorylation at Tyr-653 increases the kinase activity by a factor of 50 to 100. After this, Tyr-583 becomes phosphorylated, followed by phosphorylation of Tyr-463, Tyr-766, Tyr-583 and Tyr-585. In a third stage, Tyr-654 is autophosphorylated, resulting in a further tenfold increase of kinase activity. Phosphotyrosine residues provide docking sites for interacting proteins and so are crucial for FGFR1 function and its regulation. Ubiquitinated. FGFR1 is rapidly ubiquitinated by NEDD4 after autophosphorylation, leading to internalization and lysosomal degradation. CBL is recruited to activated FGFR1 via FRS2 and GRB2, and mediates ubiquitination and subsequent degradation of FGFR1. Post-translationally, N-glycosylated in the endoplasmic reticulum. The N-glycan chains undergo further maturation to an Endo H-resistant form in the Golgi apparatus. Expressed in the parathyroid.

The protein resides in the cell membrane. Its subcellular location is the nucleus. The protein localises to the cytoplasm. It localises to the cytosol. It is found in the cytoplasmic vesicle. It catalyses the reaction L-tyrosyl-[protein] + ATP = O-phospho-L-tyrosyl-[protein] + ADP + H(+). Its activity is regulated as follows. Present in an inactive conformation in the absence of bound ligand. Ligand binding leads to dimerization and activation by sequential autophosphorylation on tyrosine residues. Functionally, tyrosine-protein kinase that acts as a cell-surface receptor for fibroblast growth factors and plays an essential role in the regulation of embryonic development, cell proliferation, differentiation and migration. Required for normal mesoderm patterning and correct axial organization during embryonic development, normal skeletogenesis and normal development of the gonadotropin-releasing hormone (GnRH) neuronal system. Phosphorylates PLCG1, FRS2, GAB1 and SHB. Ligand binding leads to the activation of several signaling cascades. Activation of PLCG1 leads to the production of the cellular signaling molecules diacylglycerol and inositol 1,4,5-trisphosphate. Phosphorylation of FRS2 triggers recruitment of GRB2, GAB1, PIK3R1 and SOS1, and mediates activation of RAS, MAPK1/ERK2, MAPK3/ERK1 and the MAP kinase signaling pathway, as well as of the AKT1 signaling pathway. Promotes phosphorylation of SHC1, STAT1 and PTPN11/SHP2. In the nucleus, enhances RPS6KA1 and CREB1 activity and contributes to the regulation of transcription. FGFR1 signaling is down-regulated by IL17RD/SEF, and by FGFR1 ubiquitination, internalization and degradation. In Rattus norvegicus (Rat), this protein is Fibroblast growth factor receptor 1 (Fgfr1).